The following is a 1143-amino-acid chain: MKLLLLALILVLSNINLISGNGLVWPHPRLPCSPYDERGCINTQKCSSTDCDSFKRRIYFDVAYNTAFTIYQHTIFKYYSANYYKVELIVGGKVYFIHKFGQFRGDDCEFDEIIPAFYKKVQFLDLSTPIKATIQFSFDFSSHPKHANIYYSCIDVWLFDSAYYNYCPTNSGGGSGNSGGSWSSGGSGNSGGGWSSGGSGNSGGSWSSGNSGGHSTGDCPTSSGGWTSGSHSSGSWSSGGGSGSSSGGQSSGSWSSGGGSSSGGHSSGSWSSGGGSSAGGGSSSGSHSSGSWSSGGSSSGGQSSGSWSSGGGSSSGGQSSGSWSSGGGSSSGSHSSGSWSSGGSSSGSHSSGSWSSGGSSSSSGNSGWMTASGGNTGGNTGGNTGGNTGGQSSGNSGWMTASGGNTGGNTGGNTGGQSSGNSGWMTASGGNTGGNTGGNTGGQSSGSSSSGGNSGWLTSSGSNSGSSSSGSNSGWLTSSGNSVSSSSGGNSGWLTSSGGNSGGNSGSSSSGGNSGWLTSSGGNSGGSSSSGSNSGASSSGDNTGGNSGWLTSSGGNTGGNSGAATGGNSGGNSGASSSGGNSGGASSSGGNTGGNSGWLTSSGGNTGGNSGAATGGNSGGNSGASSSGGNSGWLTGGVTGGNSGGATGGNSGGATGGNSGGATGGNSGGATGGNSGGASSSGGNSGGATGGNSGGATGGNSGGATGGNSGGATGGNSGGATGGNSGGATGGNSGGASSSGGNTGGNSGGATGGNSGGATGGNSGGATGGNSGGATGGNSGGNSGASSSGGNSGWLTGGATGGNSGGATGGNSGAATGGNSGATGGNSGGNSGAATGGNIGGASSGSSSSGGNSGWLTGGATGGNSGGATGGNSGGATGGNSGGATGGNSGGATGGNSGGATGGNSGAATGANSGAATGANSGAATGANSGAATGANSGNNAAVTGAANGNNGAAAGANSGAATAANSGAATAANSGAATAANRGNNAAATGAANGNNGAAAGANSGAATAANSGAANSGAATAANSGAAAGANSGAATAANSGAATAASGGNGASGAANPGSIVTPNDQNVSPLSNSDAAATAASTTGRNPRNPTSRAPTVTPTPTSSAEEPAAGGEDSSAISKYSIQSFGIFVLSMIIYLVI.

A signal peptide spans 1–20 (MKLLLLALILVLSNINLISG). Residues 21-1121 (NGLVWPHPRL…PAAGGEDSSA (1101 aa)) lie on the Extracellular side of the membrane. The segment covering 177 to 203 (NSGGSWSSGGSGNSGGGWSSGGSGNSG) has biased composition (gly residues). Residues 177–1120 (NSGGSWSSGG…EPAAGGEDSS (944 aa)) are disordered. Residues 222–236 (SSGGWTSGSHSSGSW) are compositionally biased toward low complexity. The span at 237-283 (SSGGGSGSSSGGQSSGSWSSGGGSSSGGHSSGSWSSGGGSSAGGGSS) shows a compositional bias: gly residues. The span at 284–296 (SGSHSSGSWSSGG) shows a compositional bias: low complexity. Residues 297–330 (SSSGGQSSGSWSSGGGSSSGGQSSGSWSSGGGSS) are compositionally biased toward gly residues. Residues 331 to 368 (SGSHSSGSWSSGGSSSGSHSSGSWSSGGSSSSSGNSGW) show a composition bias toward low complexity. Residues 374–392 (GNTGGNTGGNTGGNTGGQS) are compositionally biased toward gly residues. The segment covering 393–403 (SGNSGWMTASG) has biased composition (low complexity). Composition is skewed to gly residues over residues 404 to 418 (GNTG…GGQS) and 430 to 444 (GNTG…GGQS). 2 stretches are compositionally biased toward low complexity: residues 445 to 498 (SGSS…TSSG) and 506 to 541 (GSSS…SSGD). Composition is skewed to gly residues over residues 555–573 (GNTG…GGNS), 580–596 (GNSG…GGNS), 604–622 (GNTG…GGNS), 629–783 (GNSG…GGNS), 790–843 (GNSG…GGAS), and 851–905 (GNSG…GGNS). The span at 906–1059 (GAATGANSGA…GGNGASGAAN (154 aa)) shows a compositional bias: low complexity. Polar residues predominate over residues 1062–1078 (SIVTPNDQNVSPLSNSD). A compositionally biased stretch (low complexity) spans 1094–1114 (PTSRAPTVTPTPTSSAEEPAA). The chain crosses the membrane as a helical span at residues 1122-1142 (ISKYSIQSFGIFVLSMIIYLV). Position 1143 (isoleucine 1143) is a topological domain, cytoplasmic.

Its subcellular location is the membrane. This is an uncharacterized protein from Dictyostelium discoideum (Social amoeba).